The chain runs to 242 residues: Glucosamine-6-phosphate deaminase (242 aa).

The active-site Proton acceptor; for enolization step is Asp-67. Asn-136 functions as the For ring-opening step in the catalytic mechanism. His-138 serves as the catalytic Proton acceptor; for ring-opening step. Catalysis depends on Glu-143, which acts as the For ring-opening step.

This sequence belongs to the glucosamine/galactosamine-6-phosphate isomerase family. NagB subfamily.

The enzyme catalyses alpha-D-glucosamine 6-phosphate + H2O = beta-D-fructose 6-phosphate + NH4(+). It participates in amino-sugar metabolism; N-acetylneuraminate degradation; D-fructose 6-phosphate from N-acetylneuraminate: step 5/5. In terms of biological role, catalyzes the reversible isomerization-deamination of glucosamine 6-phosphate (GlcN6P) to form fructose 6-phosphate (Fru6P) and ammonium ion. This is Glucosamine-6-phosphate deaminase from Clostridium perfringens (strain ATCC 13124 / DSM 756 / JCM 1290 / NCIMB 6125 / NCTC 8237 / Type A).